Reading from the N-terminus, the 452-residue chain is Bifunctional protein GlmU (452 aa).

The segment at 1 to 226 (MSLDIVILAA…AMEVQGANDR (226 aa)) is pyrophosphorylase. UDP-N-acetyl-alpha-D-glucosamine contacts are provided by residues 8–11 (LAAG), Lys-22, Gln-73, 78–79 (GT), 99–101 (YGD), Gly-136, Glu-151, Asn-166, and Asn-224. Asp-101 is a Mg(2+) binding site. Residue Asn-224 coordinates Mg(2+). Residues 227-247 (IQLAELERHYQLRAARRLMAQ) form a linker region. Residues 248-452 (GVTLRDPARF…IDGWQRPTKK (205 aa)) are N-acetyltransferase. UDP-N-acetyl-alpha-D-glucosamine-binding residues include Arg-330 and Lys-348. His-360 functions as the Proton acceptor in the catalytic mechanism. Residues Tyr-363 and Asn-374 each coordinate UDP-N-acetyl-alpha-D-glucosamine. Acetyl-CoA is bound by residues Ala-377, 383–384 (NY), Ser-402, Ala-420, and Arg-437.

In the N-terminal section; belongs to the N-acetylglucosamine-1-phosphate uridyltransferase family. The protein in the C-terminal section; belongs to the transferase hexapeptide repeat family. As to quaternary structure, homotrimer. Mg(2+) is required as a cofactor.

It is found in the cytoplasm. It carries out the reaction alpha-D-glucosamine 1-phosphate + acetyl-CoA = N-acetyl-alpha-D-glucosamine 1-phosphate + CoA + H(+). It catalyses the reaction N-acetyl-alpha-D-glucosamine 1-phosphate + UTP + H(+) = UDP-N-acetyl-alpha-D-glucosamine + diphosphate. Its pathway is nucleotide-sugar biosynthesis; UDP-N-acetyl-alpha-D-glucosamine biosynthesis; N-acetyl-alpha-D-glucosamine 1-phosphate from alpha-D-glucosamine 6-phosphate (route II): step 2/2. It functions in the pathway nucleotide-sugar biosynthesis; UDP-N-acetyl-alpha-D-glucosamine biosynthesis; UDP-N-acetyl-alpha-D-glucosamine from N-acetyl-alpha-D-glucosamine 1-phosphate: step 1/1. It participates in bacterial outer membrane biogenesis; LPS lipid A biosynthesis. In terms of biological role, catalyzes the last two sequential reactions in the de novo biosynthetic pathway for UDP-N-acetylglucosamine (UDP-GlcNAc). The C-terminal domain catalyzes the transfer of acetyl group from acetyl coenzyme A to glucosamine-1-phosphate (GlcN-1-P) to produce N-acetylglucosamine-1-phosphate (GlcNAc-1-P), which is converted into UDP-GlcNAc by the transfer of uridine 5-monophosphate (from uridine 5-triphosphate), a reaction catalyzed by the N-terminal domain. This Stutzerimonas stutzeri (strain A1501) (Pseudomonas stutzeri) protein is Bifunctional protein GlmU.